The following is a 444-amino-acid chain: Trigger factor (444 aa).

One can recognise a PPIase FKBP-type domain in the interval 165–250; the sequence is GDFAKFDFEG…LHEIQELKIP (86 aa).

The protein belongs to the FKBP-type PPIase family. Tig subfamily.

Its subcellular location is the cytoplasm. It catalyses the reaction [protein]-peptidylproline (omega=180) = [protein]-peptidylproline (omega=0). Involved in protein export. Acts as a chaperone by maintaining the newly synthesized protein in an open conformation. Functions as a peptidyl-prolyl cis-trans isomerase. This is Trigger factor from Campylobacter jejuni subsp. jejuni serotype O:6 (strain 81116 / NCTC 11828).